The sequence spans 393 residues: Chalcone synthase DII (393 aa).

C164 is an active-site residue.

This sequence belongs to the thiolase-like superfamily. Chalcone/stilbene synthases family.

It catalyses the reaction (E)-4-coumaroyl-CoA + 3 malonyl-CoA + 3 H(+) = 2',4,4',6'-tetrahydroxychalcone + 3 CO2 + 4 CoA. It functions in the pathway secondary metabolite biosynthesis; flavonoid biosynthesis. In terms of biological role, the primary product of this enzyme is 4,2',4',6'-tetrahydroxychalcone (also termed naringenin-chalcone or chalcone) which can under specific conditions spontaneously isomerize into naringenin. This Ipomoea batatas (Sweet potato) protein is Chalcone synthase DII (CHS-DII).